We begin with the raw amino-acid sequence, 166 residues long: C-signal (166 aa).

Post-translationally, the mature C-signal (p17) is derived from the precursor sequence (p25) by proteolytic cleavage. The subtilisin-like protease PopC is directly responsible for cleavage of p25 to p17. The cleavage site is probably located between amino acid residues 60 and 68 in p25.

The protein resides in the secreted. Its subcellular location is the cell outer membrane. With respect to regulation, synthesized as a precursor protein (p25), which is cleaved after secretion to generate the mature active C-signal (p17). The p25 precursor purified from M.xanthus cells does not display C-signal activity. Its function is as follows. Cell-cell signaling protein required for fruiting body formation, a multicellular developmental program that is induced in response to starvation. Necessary for rippling, cellular aggregation, spore differentiation and for gene expression that is initiated after 6 hours of starvation. In starving cells, the C-signal directly induces aggregation and sporulation, which are induced at distinct threshold levels of C-signaling. Contact with C-signaling induces cells to glide with high speed and low stop and reversal frequencies toward aggregation centers. The C-signal acts as a morphogen and induces distinct events at distinct threshold levels. A regulated increase in the level of C-signaling during development ensures the correct temporal order of aggregation and sporulation. The protein is C-signal of Myxococcus xanthus.